The chain runs to 878 residues: Phosphoenolpyruvate carboxylase (878 aa).

Residues His-140 and Lys-545 contribute to the active site.

It belongs to the PEPCase type 1 family. Requires Mg(2+) as cofactor.

It carries out the reaction oxaloacetate + phosphate = phosphoenolpyruvate + hydrogencarbonate. Forms oxaloacetate, a four-carbon dicarboxylic acid source for the tricarboxylic acid cycle. The sequence is that of Phosphoenolpyruvate carboxylase from Pseudomonas syringae pv. tomato (strain ATCC BAA-871 / DC3000).